Reading from the N-terminus, the 296-residue chain is Haloalkane dehalogenase (296 aa).

The AB hydrolase-1 domain maps to P31–R155. N38 provides a ligand contact to chloride. The active-site Nucleophile is the D108. W109 contacts chloride. E132 serves as the catalytic Proton donor. H272 (proton acceptor) is an active-site residue.

It belongs to the haloalkane dehalogenase family. Type 2 subfamily. In terms of assembly, monomer.

Its subcellular location is the periplasm. It catalyses the reaction 1-haloalkane + H2O = a halide anion + a primary alcohol + H(+). The catalysed reaction is (3R,6R)-1,3,4,6-tetrachlorocyclohexa-1,4-diene + 2 H2O = 2,5-dichlorocyclohexa-2,5-dien-1,4-diol + 2 chloride + 2 H(+). Its pathway is xenobiotic degradation; gamma-hexachlorocyclohexane degradation. Its activity is regulated as follows. Competitively inhibited by the key pollutants 1,2-dichloroethane (1,2-DCE) and 1,2-dichloropropane (1,2-DCP). In terms of biological role, catalyzes hydrolytic cleavage of carbon-halogen bonds in halogenated aliphatic compounds, leading to the formation of the corresponding primary alcohols, halide ions and protons. Has a broad substrate specificity since not only monochloroalkanes (C3 to C10) but also dichloroalkanes (&gt; C3), bromoalkanes, and chlorinated aliphatic alcohols are good substrates. Shows almost no activity with 1,2-dichloroethane, but very high activity with the brominated analog. Is involved in the degradation of the important environmental pollutant gamma-hexachlorocyclohexane (gamma-HCH or lindane) as it also catalyzes conversion of 1,3,4,6-tetrachloro-1,4-cyclohexadiene (1,4-TCDN) to 2,5-dichloro-2,5-cyclohexadiene-1,4-diol (2,5-DDOL) via the intermediate 2,4,5-trichloro-2,5-cyclohexadiene-1-ol (2,4,5-DNOL). This degradation pathway allows S.japonicum UT26 to grow on gamma-HCH as the sole source of carbon and energy. This is Haloalkane dehalogenase from Sphingobium indicum (strain DSM 16413 / CCM 7287 / MTCC 6362 / UT26 / NBRC 101211 / UT26S) (Sphingobium japonicum).